A 202-amino-acid polypeptide reads, in one-letter code: Large ribosomal subunit protein bL25 (202 aa).

Belongs to the bacterial ribosomal protein bL25 family. CTC subfamily. Part of the 50S ribosomal subunit; part of the 5S rRNA/L5/L18/L25 subcomplex. Contacts the 5S rRNA. Binds to the 5S rRNA independently of L5 and L18.

This is one of the proteins that binds to the 5S RNA in the ribosome where it forms part of the central protuberance. The sequence is that of Large ribosomal subunit protein bL25 from Chlorobium luteolum (strain DSM 273 / BCRC 81028 / 2530) (Pelodictyon luteolum).